The sequence spans 515 residues: Glucose-6-phosphate 1-dehydrogenase X (515 aa).

Position 2 is an N-acetylalanine (Ala-2). NADP(+) is bound by residues 38–45 (GASGDLAK), Arg-72, Tyr-147, and Lys-171. Residues Lys-171, 201–205 (HYLGK), Glu-239, and Asp-258 each bind D-glucose 6-phosphate. His-263 (proton acceptor) is an active-site residue. Residue Arg-357 participates in NADP(+) binding. Residues Lys-360 and Arg-365 each contribute to the D-glucose 6-phosphate site. Residues Lys-366, Arg-370, and Arg-393 each contribute to the NADP(+) site. Residue Gln-395 participates in D-glucose 6-phosphate binding. Residues 401-403 (YTK), 421-423 (DLT), Arg-487, and Tyr-503 contribute to the NADP(+) site. Tyr-507 bears the Phosphotyrosine mark. Residue Trp-509 participates in NADP(+) binding.

This sequence belongs to the glucose-6-phosphate dehydrogenase family. Homotetramer; dimer of dimers. Interacts with SIRT2; the interaction is enhanced by H(2)O(2) treatment. Forms a ternary complex with ALDOB and TP53; this interaction is direct. ALDOB stabilizes the complex inhibiting G6PD activity and keeping oxidative pentose phosphate metabolism in check. Post-translationally, acetylated by ELP3 at Lys-403; acetylation inhibits its homodimerization and enzyme activity. Deacetylated by SIRT2 at Lys-403; deacetylation stimulates its enzyme activity.

Its subcellular location is the cytoplasm. It is found in the cytosol. It localises to the membrane. It carries out the reaction D-glucose 6-phosphate + NADP(+) = 6-phospho-D-glucono-1,5-lactone + NADPH + H(+). It participates in carbohydrate degradation; pentose phosphate pathway; D-ribulose 5-phosphate from D-glucose 6-phosphate (oxidative stage): step 1/3. In terms of biological role, catalyzes the rate-limiting step of the oxidative pentose-phosphate pathway, which represents a route for the dissimilation of carbohydrates besides glycolysis. The main function of this enzyme is to provide reducing power (NADPH) and pentose phosphates for fatty acid and nucleic acid synthesis. In Mus musculus (Mouse), this protein is Glucose-6-phosphate 1-dehydrogenase X (G6pdx).